A 3942-amino-acid chain; its full sequence is Protein bassoon (3942 aa).

The disordered stretch occupies residues 1–158; it reads MGNEASLEGG…PTSPYSVPQI (158 aa). G2 carries the N-myristoyl glycine lipid modification. The span at 9–29 shows a compositional bias: gly residues; the sequence is GGAGEGPLPPGGSGLGPGPGA. Residues 31–52 are compositionally biased toward low complexity; it reads KPPSALAGGGQLPVAGAARAAG. Positions 53–71 are enriched in pro residues; that stretch reads PPTPGLGPVPGPGPGPGPG. The interval 62 to 71 is 5 X 2 AA tandem repeats of P-G; it reads PGPGPGPGPG. 2 stretches are compositionally biased toward polar residues: residues 85–98 and 127–154; these read SQRT…QASA and QVDS…SPYS. Residue S142 is modified to Phosphoserine. Residue R145 is modified to Omega-N-methylarginine. 2 C4-type zinc fingers span residues 167–190 and 195–217; these read CPIC…CTQC and CNQC…CLNC. 2 disordered regions span residues 228–341 and 362–457; these read TTAP…EQTQ and LMSV…KTMP. Over residues 230 to 240 the composition is skewed to polar residues; the sequence is APRSKSQQQLH. Phosphoserine occurs at positions 241 and 245. Positions 362–379 are enriched in polar residues; that stretch reads LMSVQPEADTQGQPSPSK. Residues 395–407 show a composition bias toward pro residues; the sequence is PRPPGSGPGPGPT. C4-type zinc fingers lie at residues 464-487 and 492-514; these read CPLC…CTAC and CNLC…CLNC. 4 disordered regions span residues 525–937, 950–1258, 1309–1553, and 1573–1625; these read GEPA…LQGG, GSYG…VAES, MDPM…WQQS, and RMVH…PSAG. Pro residues predominate over residues 528 to 541; the sequence is APLPLPTPQQPPAG. A run of 5 repeats spans residues 570 to 576, 577 to 583, 584 to 590, 591 to 597, and 598 to 604. The interval 570-604 is 5 X 7 AA tandem repeats of K-A-S-P-Q-[AT]-[AT]; sequence KASPQATKASPQATKASPQATKASPQTTKASPQAK. The segment covering 573-600 has biased composition (polar residues); sequence PQATKASPQATKASPQATKASPQTTKAS. The span at 632–645 shows a compositional bias: pro residues; it reads VPKPPPETTVPPGT. Residues 684–693 are compositionally biased toward polar residues; that stretch reads QDLSRSPQSL. A compositionally biased stretch (low complexity) spans 694–708; that stretch reads SDTGYSSDGVSSSQS. The span at 709–718 shows a compositional bias: polar residues; the sequence is EITGVVQQEV. Acidic residues-rich tracts occupy residues 787–802 and 865–876; these read FDSD…EDDS and SAEEDNLEEDDT. R881 carries the omega-N-methylarginine modification. A compositionally biased stretch (basic and acidic residues) spans 895–905; sequence PRPESSQEPKR. At S980 the chain carries Phosphoserine. Residues 994-1011 are compositionally biased toward low complexity; it reads PASTPSYTSGTSPTSLSS. The segment covering 1049–1062 has biased composition (acidic residues); it reads DSSEEEELREEEEL. 2 positions are modified to phosphoserine: S1050 and S1051. Positions 1063–1076 are enriched in basic and acidic residues; that stretch reads LREQEKMREVEQQR. S1100 carries the post-translational modification Phosphoserine. T1102 is subject to Phosphothreonine. Phosphoserine occurs at positions 1108 and 1114. Positions 1117-1132 are enriched in basic and acidic residues; the sequence is EELRQAAEMEELHRSS. Composition is skewed to low complexity over residues 1133-1143 and 1173-1190; these read CSEYSPSPSLD and SPTE…SGRP. Over residues 1192-1207 the composition is skewed to basic and acidic residues; it reads KSAEEAYEDMMRKAEM. Positions 1209-1219 are enriched in low complexity; that stretch reads QRQQGQVAGAR. The segment covering 1226-1240 has biased composition (polar residues); it reads SQPTGPRSQGSFEYQ. The residue at position 1236 (S1236) is a Phosphoserine. A compositionally biased stretch (low complexity) spans 1333-1343; it reads SFSTSTSSDSS. An O-linked (GlcNAc) threonine glycan is attached at T1354. Positions 1357–1366 are enriched in basic and acidic residues; the sequence is FAKEPQDPLK. The span at 1370 to 1438 shows a compositional bias: polar residues; sequence SPVSSTLTSK…TTANYGSQTE (69 aa). O-linked (GlcNAc) threonine glycosylation is present at T1395. Residues S1482, S1491, and S1493 each carry the phosphoserine modification. The span at 1488–1498 shows a compositional bias: low complexity; it reads STPSESPTFSP. Composition is skewed to polar residues over residues 1508–1522 and 1573–1609; these read EFST…SSDI and RMVH…SQMP. Residue S1707 is glycosylated (O-linked (GlcNAc) serine). Omega-N-methylarginine occurs at positions 1792 and 1796. Position 1806 is an asymmetric dimethylarginine; alternate (R1806). R1806 carries the omega-N-methylarginine; alternate modification. R1818 carries the omega-N-methylarginine modification. 2 disordered regions span residues 1831-1865 and 1926-1977; these read GVGL…TRKP and PSAP…QRPY. The segment covering 1844-1856 has biased composition (basic and acidic residues); the sequence is AEPHRATPAELRS. T1934 carries O-linked (GlcNAc) threonine glycosylation. 2 positions are modified to phosphoserine: S1990 and S2046. Omega-N-methylarginine occurs at positions 2051 and 2081. Asymmetric dimethylarginine is present on residues R2255, R2265, and R2270. O-linked (GlcNAc) threonine glycosylation occurs at T2318. 3 disordered regions span residues 2327–2378, 2476–2504, and 2524–2663; these read PVAP…KQQE, EQKQ…TELA, and TEGP…STTA. A compositionally biased stretch (pro residues) spans 2329 to 2342; that stretch reads APAPGPAPAPPPGQ. A compositionally biased stretch (basic and acidic residues) spans 2361–2378; it reads ASEKEEASQEDRQRKQQE. 2 coiled-coil regions span residues 2366-2422 and 2453-2483; these read EASQ…LVQR and LAQQ…RQKA. T2524 carries an O-linked (GlcNAc) threonine glycan. The segment covering 2541-2551 has biased composition (polar residues); that stretch reads SSASDMSLQTE. S2578 carries the post-translational modification Phosphoserine. A phosphothreonine mark is found at T2595 and T2622. Residues 2643–2655 are compositionally biased toward basic and acidic residues; it reads RHSDSGSDSKHDA. T2700 carries an O-linked (GlcNAc) threonine glycan. An interaction with DAO region spans residues 2730 to 3278; that stretch reads EPDGQAQGVA…GGVSGRPGKD (549 aa). 3 positions are modified to phosphoserine: S2811, S2860, and S2866. Residues 2854–2874 are disordered; sequence TLQRSLSDPKPLSPTAEESAK. The O-linked (GlcNAc) threonine glycan is linked to T2945. Residue S3022 is modified to Phosphoserine. Disordered stretches follow at residues 3051 to 3409, 3431 to 3560, and 3581 to 3917; these read PATP…LTSR, YYGV…PRAH, and EAYH…KILP. The segment covering 3073–3083 has biased composition (polar residues); that stretch reads TAGSSGPTQNG. Residues 3089–3114 show a composition bias toward low complexity; the sequence is APTYTGPSTYPAPTYPPGTGYPAEPG. Over residues 3202–3211 the composition is skewed to basic and acidic residues; it reads KAPEHPRGSD. Residues 3212–3237 are compositionally biased toward polar residues; sequence RSSVSQSPAPTYPSDSHYTSLEQNVP. S3301 carries the post-translational modification Phosphoserine. 2 stretches are compositionally biased toward basic and acidic residues: residues 3330–3342 and 3372–3391; these read GDSD…RADK and QGME…KDVE. S3382 carries the phosphoserine modification. The segment covering 3447–3461 has biased composition (low complexity); that stretch reads YGSSSRSRMASAYSG. Positions 3464–3487 are enriched in basic and acidic residues; that stretch reads LSSHDYSSRGKGYERERDTAERLQ. At R3502 the chain carries Omega-N-methylarginine. The segment covering 3520 to 3534 has biased composition (low complexity); that stretch reads PLGRPRPAGGALPPG. 2 stretches are compositionally biased toward basic and acidic residues: residues 3549 to 3560 and 3592 to 3602; these read VQEHVKDGPRAH and WFDKPRDARSD. Over residues 3652 to 3665 the composition is skewed to basic residues; it reads EHRHHSDHGRHSGR. The span at 3666 to 3690 shows a compositional bias: basic and acidic residues; it reads HAGEEPGRRAAKPHARDMGRHEARP. Low complexity predominate over residues 3750 to 3820; it reads TQAQPQMQGR…QARLQPQSQP (71 aa). R3823 carries the omega-N-methylarginine modification. The segment covering 3835-3851 has biased composition (pro residues); it reads KPQPGPTTAPGPQPAGP. Low complexity predominate over residues 3856–3891; that stretch reads QASSSKPPAAKAPQQGRAPQAQTTPGPGPAGAKPGA.

As to quaternary structure, interacts with PCLO, ERC2/CAST1, RIMS1 and UNC13A. Interacts with TPRG1L. Interacts with DYNLL1 and DYNLL2; these interactions potentially link PTVs to dynein and myosin V motor complexes. Interacts with ATG5; this interaction is important for the regulation of presynaptic autophagy. Interacts (via C-terminus) with TRIO (via N-terminus). Interacts with CTBP1. Interacts with SIAH1; this interaction negatively regulates SIAH1 E3 ligase activity. Interacts (via coiled region) with DAO; the interaction is direct. Post-translationally, myristoylated. The N-terminal myristoylation is not sufficient for presynaptic localization. In terms of tissue distribution, expressed in brain and retina.

The protein localises to the cytoplasm. It is found in the presynaptic active zone. It localises to the cytoskeleton. Its subcellular location is the cytoplasmic vesicle. The protein resides in the secretory vesicle. The protein localises to the synaptic vesicle membrane. Functionally, scaffold protein of the presynaptic cytomatrix at the active zone (CAZ) which is the place in the synapse where neurotransmitter is released. After synthesis, participates in the formation of Golgi-derived membranous organelles termed Piccolo-Bassoon transport vesicles (PTVs) that are transported along axons to sites of nascent synaptic contacts. At the presynaptic active zone, regulates the spatial organization of synaptic vesicle cluster, the protein complexes that execute membrane fusion and compensatory endocytosis. Also functions in processes other than assembly such as the regulation of specific presynaptic protein ubiquitination by interacting with SIAH1 or the regulation of presynaptic autophagy by associating with ATG5. Also mediates synapse to nucleus communication leading to reconfiguration of gene expression by associating with the transcriptional corepressor CTBP1 and by subsequently reducing the size of its pool available for nuclear import. Inhibits the activity of the proportion of DAO enzyme that localizes to the presynaptic active zone, which may modulate synaptic transmission. The protein is Protein bassoon of Mus musculus (Mouse).